A 255-amino-acid chain; its full sequence is 4-hydroxy-tetrahydrodipicolinate reductase (255 aa).

NAD(+) is bound by residues 8-13 (GANGRV), 88-90 (GTT), and 112-115 (ATNM). H144 functions as the Proton donor/acceptor in the catalytic mechanism. H145 is a binding site for (S)-2,3,4,5-tetrahydrodipicolinate. K148 functions as the Proton donor in the catalytic mechanism. 154–155 (GT) lines the (S)-2,3,4,5-tetrahydrodipicolinate pocket.

It belongs to the DapB family.

The protein resides in the cytoplasm. The enzyme catalyses (S)-2,3,4,5-tetrahydrodipicolinate + NAD(+) + H2O = (2S,4S)-4-hydroxy-2,3,4,5-tetrahydrodipicolinate + NADH + H(+). It carries out the reaction (S)-2,3,4,5-tetrahydrodipicolinate + NADP(+) + H2O = (2S,4S)-4-hydroxy-2,3,4,5-tetrahydrodipicolinate + NADPH + H(+). Its pathway is amino-acid biosynthesis; L-lysine biosynthesis via DAP pathway; (S)-tetrahydrodipicolinate from L-aspartate: step 4/4. Its function is as follows. Catalyzes the conversion of 4-hydroxy-tetrahydrodipicolinate (HTPA) to tetrahydrodipicolinate. The chain is 4-hydroxy-tetrahydrodipicolinate reductase from Sulfurimonas denitrificans (strain ATCC 33889 / DSM 1251) (Thiomicrospira denitrificans (strain ATCC 33889 / DSM 1251)).